The primary structure comprises 176 residues: NAD(P)H-quinone oxidoreductase subunit 6, chloroplastic (176 aa).

5 helical membrane-spanning segments follow: residues 10-30 (ILVLFLGFVLLLGGLGVVLLT), 33-53 (IYSAFSLGLVLVCISLFYFLL), 60-80 (VAQLLIYVGAINVLIIFAVMF), 95-115 (IGDGFTSLVCITIVFSLMTTI), and 152-172 (FYLPFELISIILLVSLIGAIT).

It belongs to the complex I subunit 6 family. As to quaternary structure, NDH is composed of at least 16 different subunits, 5 of which are encoded in the nucleus.

It localises to the plastid. It is found in the chloroplast thylakoid membrane. The catalysed reaction is a plastoquinone + NADH + (n+1) H(+)(in) = a plastoquinol + NAD(+) + n H(+)(out). It carries out the reaction a plastoquinone + NADPH + (n+1) H(+)(in) = a plastoquinol + NADP(+) + n H(+)(out). Functionally, NDH shuttles electrons from NAD(P)H:plastoquinone, via FMN and iron-sulfur (Fe-S) centers, to quinones in the photosynthetic chain and possibly in a chloroplast respiratory chain. The immediate electron acceptor for the enzyme in this species is believed to be plastoquinone. Couples the redox reaction to proton translocation, and thus conserves the redox energy in a proton gradient. The protein is NAD(P)H-quinone oxidoreductase subunit 6, chloroplastic (ndhG) of Brachypodium distachyon (Purple false brome).